The sequence spans 426 residues: Pistil-specific extensin-like protein (426 aa).

Positions 1–23 (MAVIISSKVLLIQLFVLVLGSFS) are cleaved as a signal peptide. Disordered regions lie at residues 56–109 (GPTF…GSKL) and 121–254 (NLPD…AAEP). Composition is skewed to pro residues over residues 60 to 94 (VLPP…PLIP), 123 to 161 (PDVP…PSPP), 168 to 224 (PPQP…PPPP), and 231 to 254 (LLPP…AAEP). 3 consecutive repeat copies span residues 69-73 (SPPPP), 76-80 (SPPPP), and 83-87 (SPPPP). Residues 69-182 (SPPPPSPSPP…PAKQPSPPPP (114 aa)) are 4 X 5 AA repeats of S-P(4). The stretch at 178 to 182 (SPPPP) is repeat 4. Asn310 is a glycosylation site (N-linked (GlcNAc...) asparagine).

Pistil (stigma and style tissue).

This is Pistil-specific extensin-like protein from Nicotiana tabacum (Common tobacco).